The chain runs to 247 residues: Nodulation protein H (247 aa).

The hydrophobic stretch occupies residues 1–17 (MTHSTLPPQPFAILAMP).

Its function is as follows. Required for the formation of sulfated nod factor. Proposed to transfer activated sulfate (PAPS) to a N-acetylglucosamine of the nod factor. The chain is Nodulation protein H (nodH) from Rhizobium meliloti (strain 1021) (Ensifer meliloti).